The chain runs to 124 residues: Small ribosomal subunit protein uS12 (124 aa).

At Asp-89 the chain carries 3-methylthioaspartic acid.

The protein belongs to the universal ribosomal protein uS12 family. Part of the 30S ribosomal subunit. Contacts proteins S8 and S17. May interact with IF1 in the 30S initiation complex.

Its function is as follows. With S4 and S5 plays an important role in translational accuracy. Functionally, interacts with and stabilizes bases of the 16S rRNA that are involved in tRNA selection in the A site and with the mRNA backbone. Located at the interface of the 30S and 50S subunits, it traverses the body of the 30S subunit contacting proteins on the other side and probably holding the rRNA structure together. The combined cluster of proteins S8, S12 and S17 appears to hold together the shoulder and platform of the 30S subunit. In Shewanella baltica (strain OS223), this protein is Small ribosomal subunit protein uS12.